We begin with the raw amino-acid sequence, 567 residues long: Geranylgeranyl transferase type-2 subunit alpha (567 aa).

PFTA repeat units follow at residues 44–78 (LDESVLELTSQILGANPDFATLWNCRREVLQHLET), 88–122 (LVKAELGFLESCLRVNPKSYGTWHHRCWLLSRLPE), 124–158 (NWARELELCARFLEADERNFHCWDYRRFVAAQAAV), 159–193 (APAEELAFTDSLITRNFSNYSSWHYRSCLLPQLHP), 207–241 (VLLKELELVQNAFFTDPNDQSAWFYHRWLLGRAEP), and 363–397 (VLQSELESCKELQELEPENKWCLLTIILLMRALDP). Phosphoserine is present on Ser98. 5 LRR repeats span residues 442 to 463 (DVRVLHLAHKDLTVLCHLEQLL), 464 to 486 (LVTHLDLSHNRLRALPPALAALR), 487 to 508 (CLEVLQASDNALENVDGVANLP), 509 to 530 (RLQELLLCNNRLQQSAAIQPLV), and 534 to 555 (RLVLLNLQGNSLCQEEGIQERL).

It belongs to the protein prenyltransferase subunit alpha family. As to quaternary structure, heterotrimer composed of RABGGTA, RABGGTB and CHM; within this trimer, RABGGTA and RABGGTB form the catalytic component B, while CHM (component A) mediates peptide substrate binding. The Rab GGTase dimer (RGGT) interacts with CHM (component A) prior to Rab protein binding; the association is stabilized by geranylgeranyl pyrophosphate (GGpp). The CHM:RGGT:Rab complex is destabilized by GGpp. Interacts with non-phosphorylated form of RAB8A; phosphorylation of RAB8A at 'Thr-72' disrupts this interaction. As to expression, most abundant in the heart, brain, spleen and liver. Less in the lung, muscle, kidney and testis; in these tissues less abundant than the beta subunit.

The catalysed reaction is geranylgeranyl diphosphate + L-cysteinyl-[protein] = S-geranylgeranyl-L-cysteinyl-[protein] + diphosphate. Its activity is regulated as follows. The enzymatic reaction requires the aid of a Rab escort protein (also called component A), such as CHM. Catalyzes the transfer of a geranylgeranyl moiety from geranylgeranyl diphosphate to both cysteines of Rab proteins with the C-terminal sequence -XXCC, -XCXC and -CCXX, such as RAB1A, RAB3A, RAB5A and RAB7A. This Rattus norvegicus (Rat) protein is Geranylgeranyl transferase type-2 subunit alpha (Rabggta).